Consider the following 37-residue polypeptide: Hemextin B (37 aa).

In terms of assembly, heterotetramer composed of 2 hemextin A and 2 hemextin B chains; non-covalently linked. Does not exist as a complex in the crude venom. May contain several disulfide bonds. Expressed by the venom gland.

It localises to the secreted. Hemextin B (monomer): does not show anticoagulant activity. Seems only to synergitically enhance hemextin A activity. Its function is as follows. Hemextin AB complex: specifically inhibits the activation of FX (F10) by the TF-FVIIa complex (extrinsic tenase complex (ETC)) (IC(50)= 100 nM, Ki=50 nM) by non-competitively inhibiting the enzymatic activity of FVIIa. The protein is Hemextin B of Hemachatus haemachatus (Rinkhals).